The following is a 155-amino-acid chain: WPP domain-containing protein 1 (155 aa).

Disordered regions lie at residues 1-41 (MAET…VTIS) and 124-155 (SVKAKSNVASPPPKDGDGIESAVDSKIDSSEA). The span at 7–39 (ESITTSSPPPISETENSTTLPTTETEKNPNPVT) shows a compositional bias: low complexity. Residues 28–131 (TTETEKNPNP…LESVKAKSNV (104 aa)) are WPP. A compositionally biased stretch (basic and acidic residues) spans 146–155 (VDSKIDSSEA).

In terms of assembly, binds to FPP proteins. Interacts with WAP, WIP1, WIP2 and WIP3 through its WPP domain. Interacts with HSP70-1, HSP70-3 and WIT1. Component of a ternary complex composed of WPP1, HSP70-1 and WIT1. In terms of tissue distribution, expressed in roots, stems and leaves.

The protein resides in the nucleus envelope. Its subcellular location is the cytoplasm. It localises to the nucleus. It is found in the golgi apparatus. The protein localises to the nucleus matrix. In terms of biological role, regulates the mitotic activity in roots. Plays a role with HSP70-1 in facilitating WIT1 nuclear envelope targeting. The protein is WPP domain-containing protein 1 (WPP1) of Arabidopsis thaliana (Mouse-ear cress).